We begin with the raw amino-acid sequence, 496 residues long: MRILNRVFLNTFQACFRRFVHQIPTIYALSTPPGTSAVAIVRISGPNACKVAKTLAGSVPKPRIASLRTIKHPVRSEVIDKALMLYFKKPSSFTGEDVVELQLHGGTAVVDVTLEAIKQSGIPNIRYAKPGEFSERAFYNGRADLTQLEGLIDVINAQTAEQLYSANKEAHGSIYDICFRWRKKLIEYRAFLEASIDFSEEHELDDIETIKLFEELNEMKDEIDAHIEGGKCKEVLRKGINVAILGPSNAGKSSLINLLANRRISIVSPQSGTTRDAIEVLVDINGFPVLLSDTAGLRKGEDVQEIEKIGIEIAKARAEESQLTLFVFPINYHSFSESLKQSEILETIKDCLRQRKPIHFLINKVDCVSDYTTMFKPIKAYLQKNFLIPENRIHAVSCKTKEGLIDFLQALSSTFECMVNPLTNNKIQANLGWNERQRQCLSSCSSHLSLALQKSSDIVVAAEEVKLATEDIGRVTGAVDMENVFSVIFSKFCVGK.

A mitochondrion-targeting transit peptide spans 1–19 (MRILNRVFLNTFQACFRRF). One can recognise a TrmE-type G domain in the interval 239–416 (GINVAILGPS…FLQALSSTFE (178 aa)). Residues 246-253 (GPSNAGKS), 293-297 (DTAGL), and 363-366 (NKVD) contribute to the GTP site.

Belongs to the TRAFAC class TrmE-Era-EngA-EngB-Septin-like GTPase superfamily. TrmE GTPase family.

It is found in the mitochondrion. Functionally, GTPase involved in the 5-carboxymethylaminomethyl modification (mnm(5)s(2)U34) of the wobble uridine base in mitochondrial tRNAs. The polypeptide is tRNA modification GTPase mss1, mitochondrial (mss1) (Schizosaccharomyces pombe (strain 972 / ATCC 24843) (Fission yeast)).